The chain runs to 308 residues: MTEITAAMVKELREKSGAGMMDCKKALAENGGDMEASIDWLRAKGIAKADKKSGRTAAEGLIGIASSGTTAVVVEVNSETDFVARNDAFQDMVRGISNVALSTDGTVDSINAATYAATGKSVSDSIKDAIATIGENMALRRATQLKVEDGVVATYVHNAVADGLGKLGVLVALKSTGNKEALNTIGRQIAMHVAATNPLAVRAEEVDAAVAERERNVFIEQSRESGKPENIIEKMVEGRMRKFFEDVALLSQAFVINPDLTVAAALKEAEKDVGAPIEITGIARLLLGEGIEKEESDFAAEVAAVAKG.

Residues 80–83 (TDFV) are involved in Mg(2+) ion dislocation from EF-Tu.

Belongs to the EF-Ts family.

It localises to the cytoplasm. Associates with the EF-Tu.GDP complex and induces the exchange of GDP to GTP. It remains bound to the aminoacyl-tRNA.EF-Tu.GTP complex up to the GTP hydrolysis stage on the ribosome. This Allorhizobium ampelinum (strain ATCC BAA-846 / DSM 112012 / S4) (Agrobacterium vitis (strain S4)) protein is Elongation factor Ts.